The sequence spans 623 residues: Aspartate--tRNA(Asp/Asn) ligase (623 aa).

Residue E175 participates in L-aspartate binding. The aspartate stretch occupies residues 199-202; sequence QQFK. L-aspartate contacts are provided by R221 and H455. 221-223 contacts ATP; the sequence is RDE. Residue E517 participates in ATP binding. R524 is a binding site for L-aspartate. An ATP-binding site is contributed by 569 to 572; it reads GVDR.

It belongs to the class-II aminoacyl-tRNA synthetase family. Type 1 subfamily. In terms of assembly, homodimer.

The protein localises to the cytoplasm. It catalyses the reaction tRNA(Asx) + L-aspartate + ATP = L-aspartyl-tRNA(Asx) + AMP + diphosphate. In terms of biological role, aspartyl-tRNA synthetase with relaxed tRNA specificity since it is able to aspartylate not only its cognate tRNA(Asp) but also tRNA(Asn). Reaction proceeds in two steps: L-aspartate is first activated by ATP to form Asp-AMP and then transferred to the acceptor end of tRNA(Asp/Asn). The chain is Aspartate--tRNA(Asp/Asn) ligase from Methylocella silvestris (strain DSM 15510 / CIP 108128 / LMG 27833 / NCIMB 13906 / BL2).